The primary structure comprises 443 residues: Acid phosphatase type 7 (443 aa).

The signal sequence occupies residues 1–23 (MAAAPPPPPPLLLLLLCVCAVFA). 3 N-linked (GlcNAc...) asparagine glycosylation sites follow: N53, N76, and N126. 3 residues coordinate Fe cation: D140, D169, and Y172. D169 contributes to the Zn(2+) binding site. Zn(2+) is bound at residue N204. Residue N210 is glycosylated (N-linked (GlcNAc...) asparagine). H288 is a binding site for Zn(2+). N313 carries N-linked (GlcNAc...) asparagine glycosylation. H338 lines the Zn(2+) pocket. Position 340 (H340) interacts with Fe cation. N355 and N409 each carry an N-linked (GlcNAc...) asparagine glycan.

This sequence belongs to the metallophosphoesterase superfamily. Purple acid phosphatase family. Requires Fe cation as cofactor. It depends on Zn(2+) as a cofactor.

The protein resides in the secreted. The enzyme catalyses a phosphate monoester + H2O = an alcohol + phosphate. The chain is Acid phosphatase type 7 from Danio rerio (Zebrafish).